The chain runs to 552 residues: uncharacterized protein (552 aa).

In terms of domain architecture, DhaL spans Lys8–Lys200.

This is an uncharacterized protein from Staphylococcus haemolyticus (strain JCSC1435).